A 293-amino-acid chain; its full sequence is Protein transport protein yif1 (293 aa).

At 1-139 (MPPKLYHPQP…PPAEDLNSPD (139 aa)) the chain is on the cytoplasmic side. A helical membrane pass occupies residues 140–160 (MYIPLMAFTTHILLLCALAGL). At 161–175 (QDDFQPELFGLRASK) the chain is on the lumenal side. A helical membrane pass occupies residues 176–196 (ACAVVLVEFLATRLGCYLLNI). Residues 197–201 (SSQSQ) lie on the Cytoplasmic side of the membrane. A helical transmembrane segment spans residues 202 to 222 (VLDLLAFSGYKFVGLILTSLS). Over 223–226 (KLFE) the chain is Lumenal. The helical transmembrane segment at 227–247 (MPWVTRFVFLYMYLATAFFLL) threads the bilayer. Residues 248 to 271 (RSLKYAVLPESTMAINATITSHQR) lie on the Cytoplasmic side of the membrane. Residues 272–292 (SRRIYFLFFIAASQILFMYVL) form a helical membrane-spanning segment. A topological domain (lumenal) is located at residue serine 293.

The protein belongs to the YIF1 family. Component of the yip1-yif1 complex, composed of at least yif1, yip1 and yos1. The complex interacts with the ER to Golgi SNAREs bos1 and sec22.

The protein resides in the endoplasmic reticulum membrane. The protein localises to the golgi apparatus membrane. It localises to the cytoplasmic vesicle. It is found in the COPII-coated vesicle. Its function is as follows. Required for fusion of ER-derived vesicles with the Golgi during ER-to-Golgi protein transport. May be involved in proper membrane localization of Rab GTPases. This Schizosaccharomyces pombe (strain 972 / ATCC 24843) (Fission yeast) protein is Protein transport protein yif1.